The following is a 338-amino-acid chain: MGSVPVPVANVPRIDVSPLFGDDKEKKLEVARAIDAASRDTGFFYAVNHGVDLPWLSRETNKFHMSITDEEKWQLAIRAYNKEHESQIRAGYYLPIPGKKAVESFCYLNPSFSPDHPRIKEPTPMHEVNVWPDEAKHPGFRAFAEKYYWDVFGLSSAVLRGYALALGRDEDFFTRHSRRDTTLSSVVLIRYPYLDPYPEPAIKTADDGTKLSFEWHEDVSLITVLYQSDVQNLQVKTPQGWQDIQADDTGFLINCGSYMAHITDDYYPAPIHRVKWVNEERQSLPFFVNLGWEDTIQPWDPATAKDGAKDAAKDKPAISYGEYLQGGLRGLINKNGQT.

Positions 89, 93, 185, and 191 each coordinate isopenicillin N. Residues Arg-89, Tyr-93, Ser-185, Tyr-191, His-216, and Asp-218 each contribute to the N-[(5S)-5-amino-5-carboxypentanoyl]-L-cysteinyl-D-valine site. One can recognise a Fe2OG dioxygenase domain in the interval 182-290; the sequence is TLSSVVLIRY…RQSLPFFVNL (109 aa). Fe(2+) is bound by residues His-216, Asp-218, and His-272. 2-oxoglutarate is bound at residue Arg-281. Position 283 (Ser-283) interacts with isopenicillin N. Residue Ser-283 participates in N-[(5S)-5-amino-5-carboxypentanoyl]-L-cysteinyl-D-valine binding.

It belongs to the iron/ascorbate-dependent oxidoreductase family. As to quaternary structure, monomer. Fe(2+) serves as cofactor.

Its subcellular location is the cytoplasm. The protein localises to the cytosol. It carries out the reaction N-[(5S)-5-amino-5-carboxypentanoyl]-L-cysteinyl-D-valine + O2 = isopenicillin N + 2 H2O. Its pathway is antibiotic biosynthesis; penicillin G biosynthesis; penicillin G from L-alpha-aminoadipate and L-cysteine and L-valine: step 2/3. Its function is as follows. Isopenicillin N synthase; part of the gene cluster that mediates the biosynthesis of penicillin, the world's most important antibiotic. IpnA catalyzes the cyclization of the tripeptide N-[(5S)-5-amino-5-carboxypentanoyl]-L-cysteinyl-D-valine (LLD-ACV or ACV) to form isopenicillin N (IPN) that contains the beta-lactam nucleus. The penicillin biosynthesis occurs via 3 enzymatic steps, the first corresponding to the production of the tripeptide N-[(5S)-5-amino-5-carboxypentanoyl]-L-cysteinyl-D-valine (LLD-ACV or ACV) by the NRPS pcbAB. The tripeptide ACV is then cyclized to isopenicillin N (IPN) by the isopenicillin N synthase pcbC that forms the beta-lactam nucleus. Finally, the alpha-aminoadipyl side chain is exchanged for phenylacetic acid by the isopenicillin N acyltransferase penDE to yield penicillin in the peroxisomal matrix. The chain is Isopenicillin N synthase (PCBC) from Hapsidospora chrysogena (Acremonium chrysogenum).